A 438-amino-acid polypeptide reads, in one-letter code: Transposon Ty2-F Gag polyprotein (438 aa).

3 stretches are compositionally biased toward polar residues: residues 1-11, 19-39, and 49-60; these read MESQQLHQNPH, ASVT…SASN, and KVNSQQETTPGT. 3 disordered regions span residues 1–86, 366–397, and 419–438; these read MESQ…GQYQ, VSRT…AKAH, and SSQY…TERI. Positions 295-397 are RNA-binding; it reads ENNINVSDRL…SSKPRAAKAH (103 aa). Positions 369–381 are enriched in low complexity; it reads TSPNTTNTKVTTR.

As to quaternary structure, homotrimer.

The protein localises to the cytoplasm. Its function is as follows. Capsid protein (CA) is the structural component of the virus-like particle (VLP), forming the shell that encapsulates the retrotransposons dimeric RNA genome. The particles are assembled from trimer-clustered units and there are holes in the capsid shells that allow for the diffusion of macromolecules. CA also has nucleocapsid-like chaperone activity, promoting primer tRNA(i)-Met annealing to the multipartite primer-binding site (PBS), dimerization of Ty2 RNA and initiation of reverse transcription. In Saccharomyces cerevisiae (strain ATCC 204508 / S288c) (Baker's yeast), this protein is Transposon Ty2-F Gag polyprotein (TY2A-F).